The primary structure comprises 95 residues: uncharacterized protein (95 aa).

Its function is as follows. The presence of the two linear plasmids, termed pGKL1 and pGKL2, in strains of Kluyveromyces lactis confers the killer phenotype to the host cell, by promoting the secretion of a toxin able to inhibit the growth of sensitive strains. This is an uncharacterized protein from Kluyveromyces lactis (strain ATCC 8585 / CBS 2359 / DSM 70799 / NBRC 1267 / NRRL Y-1140 / WM37) (Yeast).